A 102-amino-acid chain; its full sequence is Small ribosomal subunit protein eS24 (102 aa).

Belongs to the eukaryotic ribosomal protein eS24 family.

This Methanococcus maripaludis (strain DSM 14266 / JCM 13030 / NBRC 101832 / S2 / LL) protein is Small ribosomal subunit protein eS24.